Reading from the N-terminus, the 395-residue chain is NKAP-like protein (395 aa).

2 disordered regions span residues 1–77 (MSPV…RPLP) and 91–247 (CGGY…ISCK). S23 and S25 each carry phosphoserine. A compositionally biased stretch (polar residues) spans 25–35 (SPPSALQTSRS). Over residues 109–130 (DQEKEKEESYRQRRLKERERIG) the composition is skewed to basic and acidic residues. Phosphoserine is present on S149. Residues 150–161 (DEHTPAEDEVKN) show a composition bias toward basic and acidic residues. 2 stretches are compositionally biased toward basic residues: residues 177 to 197 (KTSHSTKKKRKKKPSKRKHKK) and 214 to 238 (KKVKTKKKEKKKKHRAKQLKKKRTK).

Belongs to the NKAP family. Interacts with RBPJ, CIR1 and HDAC3. As to expression, specific to testis (at protein level). Detected in differenting spermatogonia and early spermatocytes (at protein level).

Its subcellular location is the nucleus. Functionally, transcriptional repressor of Notch-mediated signaling. Required for spermatogenesis. This is NKAP-like protein from Mus musculus (Mouse).